Consider the following 189-residue polypeptide: Peptidyl-tRNA hydrolase (189 aa).

A tRNA-binding site is contributed by Tyr-15. Residue His-20 is the Proton acceptor of the active site. Residues Tyr-64, Asn-66, and Asn-112 each coordinate tRNA.

Belongs to the PTH family. As to quaternary structure, monomer.

It localises to the cytoplasm. The catalysed reaction is an N-acyl-L-alpha-aminoacyl-tRNA + H2O = an N-acyl-L-amino acid + a tRNA + H(+). In terms of biological role, hydrolyzes ribosome-free peptidyl-tRNAs (with 1 or more amino acids incorporated), which drop off the ribosome during protein synthesis, or as a result of ribosome stalling. Catalyzes the release of premature peptidyl moieties from peptidyl-tRNA molecules trapped in stalled 50S ribosomal subunits, and thus maintains levels of free tRNAs and 50S ribosomes. This is Peptidyl-tRNA hydrolase from Sulfurihydrogenibium sp. (strain YO3AOP1).